The chain runs to 490 residues: Protein nucleotidyltransferase YdiU (490 aa).

The ATP site is built by Gly-94, Gly-96, Arg-97, Lys-117, Asp-129, Gly-130, Arg-180, and Arg-187. Asp-256 acts as the Proton acceptor in catalysis. Positions 257 and 266 each coordinate Mg(2+). Asp-266 serves as a coordination point for ATP.

This sequence belongs to the SELO family. The cofactor is Mg(2+). Mn(2+) serves as cofactor.

The enzyme catalyses L-seryl-[protein] + ATP = 3-O-(5'-adenylyl)-L-seryl-[protein] + diphosphate. It catalyses the reaction L-threonyl-[protein] + ATP = 3-O-(5'-adenylyl)-L-threonyl-[protein] + diphosphate. It carries out the reaction L-tyrosyl-[protein] + ATP = O-(5'-adenylyl)-L-tyrosyl-[protein] + diphosphate. The catalysed reaction is L-histidyl-[protein] + UTP = N(tele)-(5'-uridylyl)-L-histidyl-[protein] + diphosphate. The enzyme catalyses L-seryl-[protein] + UTP = O-(5'-uridylyl)-L-seryl-[protein] + diphosphate. It catalyses the reaction L-tyrosyl-[protein] + UTP = O-(5'-uridylyl)-L-tyrosyl-[protein] + diphosphate. In terms of biological role, nucleotidyltransferase involved in the post-translational modification of proteins. It can catalyze the addition of adenosine monophosphate (AMP) or uridine monophosphate (UMP) to a protein, resulting in modifications known as AMPylation and UMPylation. In Clostridium perfringens (strain 13 / Type A), this protein is Protein nucleotidyltransferase YdiU.